We begin with the raw amino-acid sequence, 245 residues long: tRNA pseudouridine synthase A (245 aa).

Aspartate 52 (nucleophile) is an active-site residue. Tyrosine 111 contributes to the substrate binding site.

Belongs to the tRNA pseudouridine synthase TruA family. In terms of assembly, homodimer.

It carries out the reaction uridine(38/39/40) in tRNA = pseudouridine(38/39/40) in tRNA. In terms of biological role, formation of pseudouridine at positions 38, 39 and 40 in the anticodon stem and loop of transfer RNAs. This Wolbachia pipientis subsp. Culex pipiens (strain wPip) protein is tRNA pseudouridine synthase A.